Here is a 460-residue protein sequence, read N- to C-terminus: Nitrogenase iron-iron protein beta chain (460 aa).

[8Fe-7S] cluster-binding residues include Cys-20, Cys-45, Cys-104, and Ser-143.

This sequence belongs to the NifD/NifK/NifE/NifN family. In terms of assembly, hexamer of two alpha, two beta, and two delta chains. The cofactor is [8Fe-7S] cluster.

It catalyses the reaction N2 + 8 reduced [2Fe-2S]-[ferredoxin] + 16 ATP + 16 H2O = H2 + 8 oxidized [2Fe-2S]-[ferredoxin] + 2 NH4(+) + 16 ADP + 16 phosphate + 6 H(+). Its function is as follows. This iron-iron protein is part of the nitrogenase complex that catalyzes the key enzymatic reactions in nitrogen fixation. Other nitrogenase complexes utilize a molybdenum-iron protein or a vanadium-iron protein. This Rhodobacter capsulatus (Rhodopseudomonas capsulata) protein is Nitrogenase iron-iron protein beta chain (anfK).